A 196-amino-acid chain; its full sequence is ATP-dependent Clp protease proteolytic subunit (196 aa).

Ser-101 acts as the Nucleophile in catalysis. His-126 is an active-site residue.

Belongs to the peptidase S14 family. In terms of assembly, component of the chloroplastic Clp protease core complex.

It localises to the plastid. Its subcellular location is the chloroplast stroma. The enzyme catalyses Hydrolysis of proteins to small peptides in the presence of ATP and magnesium. alpha-casein is the usual test substrate. In the absence of ATP, only oligopeptides shorter than five residues are hydrolyzed (such as succinyl-Leu-Tyr-|-NHMec, and Leu-Tyr-Leu-|-Tyr-Trp, in which cleavage of the -Tyr-|-Leu- and -Tyr-|-Trp bonds also occurs).. In terms of biological role, cleaves peptides in various proteins in a process that requires ATP hydrolysis. Has a chymotrypsin-like activity. Plays a major role in the degradation of misfolded proteins. In Arabis hirsuta (Hairy rock-cress), this protein is ATP-dependent Clp protease proteolytic subunit.